An 80-amino-acid chain; its full sequence is Anaphase-promoting complex subunit hcn1 (80 aa).

An N-acetylmethionine modification is found at Met1. The segment at 26 to 54 (QTLDSESTTEEALQKNEESTRLSPEKKKI) is disordered. Basic and acidic residues predominate over residues 37–54 (ALQKNEESTRLSPEKKKI).

The APC/C is composed of at least 13 subunits: apc1, apc2, nuc2, apc4, apc5, cut9, apc8, apc10, apc11, hcn1, apc13, apc14 and apc15. Interacts directly (via N-terminus) with cut9.

Component of the anaphase promoting complex/cyclosome (APC/C), a cell cycle-regulated E3 ubiquitin-protein ligase complex that controls progression through mitosis and the G1 phase of the cell cycle. The APC/C is thought to confer substrate specificity and, in the presence of ubiquitin-conjugating E2 enzymes, it catalyzes the formation of protein-ubiquitin conjugates that are subsequently degraded by the 26S proteasome. Has a role in assembling cut9 in the 20S APC/cyclosome. The polypeptide is Anaphase-promoting complex subunit hcn1 (hcn1) (Schizosaccharomyces pombe (strain 972 / ATCC 24843) (Fission yeast)).